The chain runs to 396 residues: Ribosomal RNA large subunit methyltransferase I (396 aa).

In terms of domain architecture, PUA spans 2–81; the sequence is SVRLVLAKGR…ESIDIAFFTR (80 aa).

It belongs to the methyltransferase superfamily. RlmI family.

Its subcellular location is the cytoplasm. It carries out the reaction cytidine(1962) in 23S rRNA + S-adenosyl-L-methionine = 5-methylcytidine(1962) in 23S rRNA + S-adenosyl-L-homocysteine + H(+). Its function is as follows. Specifically methylates the cytosine at position 1962 (m5C1962) of 23S rRNA. The polypeptide is Ribosomal RNA large subunit methyltransferase I (Escherichia coli (strain UTI89 / UPEC)).